Consider the following 393-residue polypeptide: Phosphoglycerate kinase (393 aa).

Substrate is bound by residues 22–24, Arg-37, 60–63, Arg-119, and Arg-152; these read DFN and HLGR. ATP contacts are provided by residues Lys-202, Gly-293, Glu-324, and 350–353; that span reads GGDS.

The protein belongs to the phosphoglycerate kinase family. Monomer.

Its subcellular location is the cytoplasm. It carries out the reaction (2R)-3-phosphoglycerate + ATP = (2R)-3-phospho-glyceroyl phosphate + ADP. The protein operates within carbohydrate degradation; glycolysis; pyruvate from D-glyceraldehyde 3-phosphate: step 2/5. This Borrelia garinii subsp. bavariensis (strain ATCC BAA-2496 / DSM 23469 / PBi) (Borreliella bavariensis) protein is Phosphoglycerate kinase.